A 233-amino-acid chain; its full sequence is Superoxide dismutase [Mn], mitochondrial (233 aa).

Residues 1–26 (MFAKTAAANLTKKGGLSLLSTTARRT) constitute a mitochondrion transit peptide. Positions 52 and 107 each coordinate Mn(2+). Phosphothreonine is present on residues T147 and T149. D194 and H198 together coordinate Mn(2+).

Belongs to the iron/manganese superoxide dismutase family. In terms of assembly, homotetramer. Requires Mn(2+) as cofactor.

Its subcellular location is the mitochondrion matrix. The catalysed reaction is 2 superoxide + 2 H(+) = H2O2 + O2. In terms of biological role, destroys superoxide anion radicals which are normally produced within the cells and which are toxic to biological systems. This chain is Superoxide dismutase [Mn], mitochondrial (SOD2), found in Saccharomyces cerevisiae (strain ATCC 204508 / S288c) (Baker's yeast).